The primary structure comprises 87 residues: Small ribosomal subunit protein uS15 (87 aa).

It belongs to the universal ribosomal protein uS15 family. In terms of assembly, part of the 30S ribosomal subunit. Forms a bridge to the 50S subunit in the 70S ribosome, contacting the 23S rRNA.

One of the primary rRNA binding proteins, it binds directly to 16S rRNA where it helps nucleate assembly of the platform of the 30S subunit by binding and bridging several RNA helices of the 16S rRNA. Functionally, forms an intersubunit bridge (bridge B4) with the 23S rRNA of the 50S subunit in the ribosome. This is Small ribosomal subunit protein uS15 from Clostridium perfringens (strain ATCC 13124 / DSM 756 / JCM 1290 / NCIMB 6125 / NCTC 8237 / Type A).